Here is a 96-residue protein sequence, read N- to C-terminus: Co-chaperonin GroES (96 aa).

The protein belongs to the GroES chaperonin family. As to quaternary structure, heptamer of 7 subunits arranged in a ring. Interacts with the chaperonin GroEL.

The protein localises to the cytoplasm. Its function is as follows. Together with the chaperonin GroEL, plays an essential role in assisting protein folding. The GroEL-GroES system forms a nano-cage that allows encapsulation of the non-native substrate proteins and provides a physical environment optimized to promote and accelerate protein folding. GroES binds to the apical surface of the GroEL ring, thereby capping the opening of the GroEL channel. This chain is Co-chaperonin GroES, found in Pelagibacter ubique (strain HTCC1062).